The following is a 930-amino-acid chain: RNA-binding protein 10 (930 aa).

2 stretches are compositionally biased toward basic and acidic residues: residues 1–14 (MEYE…DRTG) and 21–45 (RSQD…RSYP). A disordered region spans residues 1-127 (MEYERRGGRG…EDEEEEEEKA (127 aa)). Residues 59-70 (DSSEEQSAEDSY) show a composition bias toward acidic residues. Phosphoserine is present on residues Ser61 and Ser89. Residues 80–89 (RRRRRRHRHS) show a composition bias toward basic residues. The span at 98 to 111 (RDGDYRDQDYRTEQ) shows a compositional bias: basic and acidic residues. The segment covering 112–125 (GEEEEEEDEEEEEE) has biased composition (acidic residues). An RRM 1 domain is found at 129–209 (NIVMLRMLPQ…QKVSMHYSDP (81 aa)). A RanBP2-type zinc finger spans residues 212–242 (KINEDWLCNKCGVQNFKRREKCFKCGVPKSE). The 85-residue stretch at 300-384 (DTIILRNLNP…KTINVEFAKG (85 aa)) folds into the RRM 2 domain. The residue at position 383 (Lys383) is an N6-acetyllysine. 5 disordered regions span residues 464 to 487 (GPGM…EAGA), 503 to 522 (APGL…TATN), 537 to 566 (ELQS…QYPV), 620 to 646 (EQSA…HKTK), and 712 to 753 (DLPK…EEKL). Over residues 507–522 (YQQSAEGSSGQSTATN) the composition is skewed to polar residues. The segment covering 540–562 (SPTQPSSSAFPPATSPTAPEAYS) has biased composition (low complexity). Positions 623–639 (ADGHKDTGASSKEGKEK) are enriched in basic and acidic residues. Ser718, Ser723, Ser733, Ser736, and Ser738 each carry phosphoserine. Positions 743–753 (ERGGPEREEKL) are enriched in basic and acidic residues. The C2H2-type; atypical zinc-finger motif lies at 759–784 (LACLLCRRQFPSKEALIRHQQLSGLH). 3 positions are modified to phosphoserine: Ser781, Ser797, and Ser845. The disordered stretch occupies residues 818 to 861 (AAERREKYGIPEPPEPKRRKYGGISTASVDFEQPTRDGLGSDNI). In terms of domain architecture, G-patch spans 858–904 (SDNIGSRMLQAMGWKEGSGLGRKKQGIVTPIEAQTRVRGSGLGARGS). Arg902 bears the Omega-N-methylarginine mark.

As to quaternary structure, associates with the spliceosome. Component of a large chromatin remodeling complex, at least composed of MYSM1, PCAF, RBM10 and KIF11/TRIP5.

It is found in the nucleus. Binds to ssRNA containing the consensus sequence 5'-AGGUAA-3'. May be involved in post-transcriptional processing, most probably in mRNA splicing. Binds to RNA homopolymers, with a preference for poly(G) and poly(U) and little for poly(A). May bind to specific miRNA hairpins. This is RNA-binding protein 10 from Mus musculus (Mouse).